The sequence spans 185 residues: Somatotropin (185 aa).

A disulfide bond links Cys-52 and Cys-158. Zn(2+) is bound at residue Glu-167. Cys-175 and Cys-183 are joined by a disulfide.

The protein belongs to the somatotropin/prolactin family.

Its subcellular location is the secreted. In terms of biological role, growth hormone plays an important role in growth control and is involved in the regulation of several anabolic processes. Implicated as an osmoregulatory substance important for seawater adaptation. This is Somatotropin (gh) from Katsuwonus pelamis (Skipjack tuna).